Here is a 336-residue protein sequence, read N- to C-terminus: MASQPPFKTNFCSIFGSSFPNSTSESNTNTSTIQTSGIKLPVIDLSHLTSGEEVKRKRCVKQMVAAAKEWGFFQIVNHGIPKDVFEMMLLEEKKLFDQPFSVKVRERFSDLSKNSYRWGNPSATSPAQYSVSEAFHIILSEVSRISDDRNNLRTIVETYVQEIARVAQMICEILGKQVNVSSEYFENIFELENSFLRLNKYHPSVFGSEVFGLVPHTDTSFLTILSQDQIGGLELENNGQWISVKPCLEALTVNIGDMFQALSNGVYQSVRHRVISPANIERMSIAFFVCPYLETEIDCFGYPKKYRRFSFREYKEQSEHDVKETGDKVGLSRFLI.

The Fe2OG dioxygenase domain occupies 191–291 (LENSFLRLNK…RMSIAFFVCP (101 aa)). Positions 216, 218, and 272 each coordinate Fe cation. Arg282 is an active-site residue. Residue Arg282 participates in 2-oxoglutarate binding.

This sequence belongs to the iron/ascorbate-dependent oxidoreductase family. GA2OX subfamily. Fe(2+) serves as cofactor.

The catalysed reaction is gibberellin A1 + 2-oxoglutarate + O2 = gibberellin A8 + succinate + CO2. Its pathway is plant hormone biosynthesis; gibberellin biosynthesis. In terms of biological role, catalyzes the 2-beta-hydroxylation of gibberellins (GA) precursors, rendering them unable to be converted to active GAs. Hydroxylates the C20-GA GA12 and GA53, but is not active on C19-GAs, like GA1, GA4, GA9 and GA20. This is Gibberellin 2-beta-dioxygenase 7 (GA2OX7) from Arabidopsis thaliana (Mouse-ear cress).